Here is a 126-residue protein sequence, read N- to C-terminus: MSTIRSFEDLKAKRQEILDRKAARNGKTIINVSLATCSIAAGGKVAMEAMQDEVAKNGLTGVEFMQSSCMTYCYAEPTVEITLPGKDPVVFGGVDENRARELVTEYVMKGEPVEGIIPVNYERVVL.

Heterotetramer composed of HndA, HndB, HndC and HndD subunits. HndA and HndB could form a heterodimeric intermediate in the electron transfer between the active site of hydrogenase subunit HndD and the NADP reduction site of the reducing subunit HndC.

The enzyme catalyses H2 + NADP(+) = NADPH + H(+). Its activity is regulated as follows. Inhibited by oxygen. Catalyzes the reduction of NADP in the presence of molecular H2 to yield NADPH. In Solidesulfovibrio fructosivorans (Desulfovibrio fructosivorans), this protein is NADP-reducing hydrogenase subunit HndB (hndB).